The chain runs to 230 residues: Flagellar L-ring protein (230 aa).

An N-terminal signal peptide occupies residues 1–15; that stretch reads MSRLPSLSRPCLAIA. A lipid anchor (N-palmitoyl cysteine) is attached at cysteine 16. Residue cysteine 16 is the site of S-diacylglycerol cysteine attachment.

This sequence belongs to the FlgH family. The basal body constitutes a major portion of the flagellar organelle and consists of four rings (L,P,S, and M) mounted on a central rod.

It localises to the cell outer membrane. Its subcellular location is the bacterial flagellum basal body. In terms of biological role, assembles around the rod to form the L-ring and probably protects the motor/basal body from shearing forces during rotation. The sequence is that of Flagellar L-ring protein from Xanthomonas axonopodis pv. citri (strain 306).